Here is a 264-residue protein sequence, read N- to C-terminus: MFFKQLAVLSFATSALAAHGVRNPGTNSLNFNRIDKRFTFPIPESQGSQTFEATYTISGNETFDGGMKTYGRGVDCSGQAEGGDSDAVFIVKDGGTLKNAIIGADQIEGVHCEGSCTIENVWWEAVCEDALSLKTGDGPFTVIGGGAQNADDKVIQHNGGGTVSISGFTAYNFGKLYRSCGNCDEMYERHVTLESVTAVSGSASLVGINSNYGDTATIKSDTCVTDVDTVCTEYEGTDNNDEEPQEISTGPSNACQYTDPLPSC.

Residues 1–17 (MFFKQLAVLSFATSALA) form the signal peptide. An N-linked (GlcNAc...) asparagine glycan is attached at Asn-60. Residues 234–264 (YEGTDNNDEEPQEISTGPSNACQYTDPLPSC) are disordered. Residues 235-245 (EGTDNNDEEPQ) are compositionally biased toward acidic residues. A compositionally biased stretch (polar residues) spans 246-256 (EISTGPSNACQ).

This sequence belongs to the polysaccharide lyase 3 family. Ca(2+) is required as a cofactor.

It localises to the secreted. It catalyses the reaction Eliminative cleavage of (1-&gt;4)-alpha-D-galacturonan to give oligosaccharides with 4-deoxy-alpha-D-galact-4-enuronosyl groups at their non-reducing ends.. Pectinolytic enzyme consist of four classes of enzymes: pectin lyase, polygalacturonase, pectin methylesterase and rhamnogalacturonase. Among pectinolytic enzymes, pectin lyase is the most important in depolymerization of pectin, since it cleaves internal glycosidic bonds of highly methylated pectins. Favors pectate, the anion, over pectin, the methyl ester. The sequence is that of Probable pectate lyase D (plyD) from Emericella nidulans (strain FGSC A4 / ATCC 38163 / CBS 112.46 / NRRL 194 / M139) (Aspergillus nidulans).